Reading from the N-terminus, the 612-residue chain is Dihydroxy-acid dehydratase (612 aa).

D81 serves as a coordination point for Mg(2+). [2Fe-2S] cluster is bound at residue C122. Residues D123 and K124 each contribute to the Mg(2+) site. At K124 the chain carries N6-carboxylysine. C193 lines the [2Fe-2S] cluster pocket. A Mg(2+)-binding site is contributed by E489. S515 serves as the catalytic Proton acceptor.

This sequence belongs to the IlvD/Edd family. Homodimer. [2Fe-2S] cluster serves as cofactor. The cofactor is Mg(2+).

It carries out the reaction (2R)-2,3-dihydroxy-3-methylbutanoate = 3-methyl-2-oxobutanoate + H2O. It catalyses the reaction (2R,3R)-2,3-dihydroxy-3-methylpentanoate = (S)-3-methyl-2-oxopentanoate + H2O. It functions in the pathway amino-acid biosynthesis; L-isoleucine biosynthesis; L-isoleucine from 2-oxobutanoate: step 3/4. It participates in amino-acid biosynthesis; L-valine biosynthesis; L-valine from pyruvate: step 3/4. Its function is as follows. Functions in the biosynthesis of branched-chain amino acids. Catalyzes the dehydration of (2R,3R)-2,3-dihydroxy-3-methylpentanoate (2,3-dihydroxy-3-methylvalerate) into 2-oxo-3-methylpentanoate (2-oxo-3-methylvalerate) and of (2R)-2,3-dihydroxy-3-methylbutanoate (2,3-dihydroxyisovalerate) into 2-oxo-3-methylbutanoate (2-oxoisovalerate), the penultimate precursor to L-isoleucine and L-valine, respectively. The chain is Dihydroxy-acid dehydratase from Stenotrophomonas maltophilia (strain R551-3).